We begin with the raw amino-acid sequence, 138 residues long: Translation initiation factor 2 subunit beta (138 aa).

This sequence belongs to the eIF-2-beta/eIF-5 family. As to quaternary structure, heterotrimer composed of an alpha, a beta and a gamma chain.

Functionally, eIF-2 functions in the early steps of protein synthesis by forming a ternary complex with GTP and initiator tRNA. This chain is Translation initiation factor 2 subunit beta, found in Methanococcus vannielii (strain ATCC 35089 / DSM 1224 / JCM 13029 / OCM 148 / SB).